We begin with the raw amino-acid sequence, 505 residues long: Alpha-internexin (505 aa).

The segment at 1 to 87 (MSFGSEHYLC…SQAAARTNEY (87 aa)) is head. Residue Ser-72 is modified to Phosphoserine. A coil 1A region spans residues 88 to 129 (KIIRTNEKEQLQGLNDRFAVFIEKVHQLETQNRALEAELAAL). The region spanning 94–407 (EKEQLQGLND…KLLEGEETRF (314 aa)) is the IF rod domain. Positions 130–142 (RQRHAEPSRVGEL) are linker 1. The coil 1B stretch occupies residues 143 to 238 (FQRELRELRA…QVHDEEVAEL (96 aa)). Ser-219 carries the phosphoserine modification. The linker 2 stretch occupies residues 239-262 (LATLQASSQAAAEVDVAVAKPDLT). The coil 2 stretch occupies residues 263-408 (SALREIRAQY…LLEGEETRFS (146 aa)). An N6-acetyllysine modification is found at Lys-290. A phosphoserine mark is found at Ser-335, Ser-474, and Ser-502. The tract at residues 409-505 (TSGLSISGLN…EITTSSSQKM (97 aa)) is tail. The disordered stretch occupies residues 438 to 505 (KVSSAGLSLK…EITTSSSQKM (68 aa)). Positions 495–505 (EEITTSSSQKM) are enriched in low complexity.

Belongs to the intermediate filament family. In terms of assembly, forms homodimers (in vitro). Forms heterodimers with NEFL, NEFM or NEFH (in vitro). In terms of processing, O-glycosylated. As to expression, expressed in the dorsal root ganglion neurons (at protein level).

Its function is as follows. Class-IV neuronal intermediate filament that is able to self-assemble. It is involved in the morphogenesis of neurons. It may form an independent structural network without the involvement of other neurofilaments or it may cooperate with NEFL to form the filamentous backbone to which NEFM and NEFH attach to form the cross-bridges. May also cooperate with the neuronal intermediate filament protein PRPH to form filamentous networks. The protein is Alpha-internexin (Ina) of Rattus norvegicus (Rat).